The primary structure comprises 256 residues: Ribonuclease 3 (256 aa).

Positions Leu6–Gly128 constitute an RNase III domain. A Mg(2+)-binding site is contributed by Glu41. The active site involves Asp45. Residues Asp114 and Glu117 each contribute to the Mg(2+) site. Residue Glu117 is part of the active site. The region spanning Asp155–Ala225 is the DRBM domain.

It belongs to the ribonuclease III family. Homodimer. Mg(2+) serves as cofactor.

It is found in the cytoplasm. It catalyses the reaction Endonucleolytic cleavage to 5'-phosphomonoester.. Its function is as follows. Digests double-stranded RNA. Involved in the processing of primary rRNA transcript to yield the immediate precursors to the large and small rRNAs (23S and 16S). Processes some mRNAs, and tRNAs when they are encoded in the rRNA operon. Processes pre-crRNA and tracrRNA of type II CRISPR loci if present in the organism. This is Ribonuclease 3 from Bordetella bronchiseptica (strain ATCC BAA-588 / NCTC 13252 / RB50) (Alcaligenes bronchisepticus).